The primary structure comprises 447 residues: Ribulose bisphosphate carboxylase large chain (447 aa).

Substrate is bound by residues Asn-89 and Thr-139. Catalysis depends on Lys-141, which acts as the Proton acceptor. Position 143 (Lys-143) interacts with substrate. Residues Lys-167, Asp-169, and Glu-170 each contribute to the Mg(2+) site. Lys-167 carries the N6-carboxylysine modification. Catalysis depends on His-260, which acts as the Proton acceptor. 3 residues coordinate substrate: Arg-261, His-293, and Ser-345.

Belongs to the RuBisCO large chain family. Type I subfamily. In terms of assembly, heterohexadecamer of 8 large chains and 8 small chains; disulfide-linked. The disulfide link is formed within the large subunit homodimers. Mg(2+) is required as a cofactor. In terms of processing, the disulfide bond which can form in the large chain dimeric partners within the hexadecamer appears to be associated with oxidative stress and protein turnover.

The protein localises to the plastid. It localises to the chloroplast. It carries out the reaction 2 (2R)-3-phosphoglycerate + 2 H(+) = D-ribulose 1,5-bisphosphate + CO2 + H2O. It catalyses the reaction D-ribulose 1,5-bisphosphate + O2 = 2-phosphoglycolate + (2R)-3-phosphoglycerate + 2 H(+). In terms of biological role, ruBisCO catalyzes two reactions: the carboxylation of D-ribulose 1,5-bisphosphate, the primary event in carbon dioxide fixation, as well as the oxidative fragmentation of the pentose substrate in the photorespiration process. Both reactions occur simultaneously and in competition at the same active site. The sequence is that of Ribulose bisphosphate carboxylase large chain from Convolvulus tricolor (Dwarf morning glory).